The primary structure comprises 104 residues: PTS system lactose-specific EIIA component (104 aa).

In terms of domain architecture, PTS EIIA type-3 spans 1–102 (MNRDEVQLLG…MKHLIELYKK (102 aa)). H78 functions as the Tele-phosphohistidine intermediate in the catalytic mechanism. At H78 the chain carries Phosphohistidine; by HPr. D81 lines the Mg(2+) pocket.

As to quaternary structure, homotrimer. Mg(2+) is required as a cofactor.

It is found in the cytoplasm. In terms of biological role, the phosphoenolpyruvate-dependent sugar phosphotransferase system (sugar PTS), a major carbohydrate active transport system, catalyzes the phosphorylation of incoming sugar substrates concomitantly with their translocation across the cell membrane. The enzyme II LacEF PTS system is involved in lactose transport. The polypeptide is PTS system lactose-specific EIIA component (Staphylococcus epidermidis (strain ATCC 35984 / DSM 28319 / BCRC 17069 / CCUG 31568 / BM 3577 / RP62A)).